The sequence spans 431 residues: MNSISITPGSSLKGELVVPGDKSISHRSIMLGAIANGVTTVRGFLRGEDNMATMAAFRAMGVRIDDDGHLLSIHGRGLHGLEEPGDVLDCGNSGTSMRLLTGLLAGQNFFSVLSGDQYLRKRPMKRVVEPLSRMGARILGRAGGNLAPLAISGGTLNAIGYESPVSSAQIKSAIMLAGLYADGDTSVREPSLSRDHSERMFALFGASLETFHNGVTVKGGIELHAQEIHVPGDISSAAFFIVAALITPDSELLIRNVGVNPTRTGIIDVLRSMGGSIELVDEREVSAEPVADILVRSSRLKGVRIEGQTVPRAIDEFPAICVAAACAEGTTSIRDARELRVKETDRISAMAVNLRTLGVTVDECDEGMDITGVERLGGGVAESFGDHRIAMSLSVAGLVSADAVRVNDIDCVSTSFPNFFSLLERFRTGAP.

The 3-phosphoshikimate site is built by lysine 22, serine 23, and arginine 27. Lysine 22 contacts phosphoenolpyruvate. Positions 94 and 122 each coordinate phosphoenolpyruvate. 3-phosphoshikimate contacts are provided by serine 167, glutamine 169, aspartate 315, and lysine 342. Glutamine 169 serves as a coordination point for phosphoenolpyruvate. Aspartate 315 serves as the catalytic Proton acceptor. Arginine 346 and arginine 388 together coordinate phosphoenolpyruvate.

It belongs to the EPSP synthase family. Monomer.

It is found in the cytoplasm. The enzyme catalyses 3-phosphoshikimate + phosphoenolpyruvate = 5-O-(1-carboxyvinyl)-3-phosphoshikimate + phosphate. It participates in metabolic intermediate biosynthesis; chorismate biosynthesis; chorismate from D-erythrose 4-phosphate and phosphoenolpyruvate: step 6/7. Functionally, catalyzes the transfer of the enolpyruvyl moiety of phosphoenolpyruvate (PEP) to the 5-hydroxyl of shikimate-3-phosphate (S3P) to produce enolpyruvyl shikimate-3-phosphate and inorganic phosphate. The sequence is that of 3-phosphoshikimate 1-carboxyvinyltransferase from Pelobacter propionicus (strain DSM 2379 / NBRC 103807 / OttBd1).